Reading from the N-terminus, the 138-residue chain is ATP synthase epsilon chain (138 aa).

It belongs to the ATPase epsilon chain family. F-type ATPases have 2 components, CF(1) - the catalytic core - and CF(0) - the membrane proton channel. CF(1) has five subunits: alpha(3), beta(3), gamma(1), delta(1), epsilon(1). CF(0) has three main subunits: a, b and c.

It localises to the cell membrane. Produces ATP from ADP in the presence of a proton gradient across the membrane. In Streptococcus gordonii (strain Challis / ATCC 35105 / BCRC 15272 / CH1 / DL1 / V288), this protein is ATP synthase epsilon chain.